Here is a 339-residue protein sequence, read N- to C-terminus: 4-amino-5-hydroxymethyl-2-methylpyrimidine phosphate synthase (339 aa).

At Lys62 the chain carries N6-(pyridoxal phosphate)lysine. The active site involves His66. 115-118 is a binding site for pyridoxal 5'-phosphate; sequence GEFG. Positions 195–199 match the CCCFC; essential for catalytic activity, may be the site of iron coordination motif; sequence CCCFC.

This sequence belongs to the NMT1/THI5 family. As to quaternary structure, homodimer. The cofactor is Fe(3+).

It catalyses the reaction N(6)-(pyridoxal phosphate)-L-lysyl-[4-amino-5-hydroxymethyl-2-methylpyrimidine phosphate synthase] + L-histidyl-[4-amino-5-hydroxymethyl-2-methylpyrimidine phosphate synthase] + 2 Fe(3+) + 4 H2O = L-lysyl-[4-amino-5-hydroxymethyl-2-methylpyrimidine phosphate synthase] + (2S)-2-amino-5-hydroxy-4-oxopentanoyl-[4-amino-5-hydroxymethyl-2-methylpyrimidine phosphate synthase] + 4-amino-2-methyl-5-(phosphooxymethyl)pyrimidine + 3-oxopropanoate + 2 Fe(2+) + 2 H(+). It participates in cofactor biosynthesis; thiamine diphosphate biosynthesis. In terms of biological role, responsible for the formation of the pyrimidine heterocycle in the thiamine biosynthesis pathway. Catalyzes the formation of hydroxymethylpyrimidine phosphate (HMP-P) from histidine and pyridoxal phosphate (PLP). The protein uses PLP and the active site histidine to form HMP-P, generating an inactive enzyme. The enzyme can only undergo a single turnover, which suggests it is a suicide enzyme. This Candida albicans (strain WO-1) (Yeast) protein is 4-amino-5-hydroxymethyl-2-methylpyrimidine phosphate synthase.